A 397-amino-acid chain; its full sequence is Lysophospholipid transporter LplT (397 aa).

Over Met-1–Lys-17 the chain is Periplasmic. A helical transmembrane segment spans residues Ala-18–Leu-38. Residues Ala-39–Pro-52 are Cytoplasmic-facing. The chain crosses the membrane as a helical span at residues Ile-53 to Ala-73. Topologically, residues Asp-74 to Leu-90 are periplasmic. Residues Leu-91 to Val-111 traverse the membrane as a helical segment. Residues Gly-112–Thr-144 lie on the Cytoplasmic side of the membrane. Residues Ile-145–Val-165 traverse the membrane as a helical segment. Position 166 (Ala-166) is a topological domain, periplasmic. The helical transmembrane segment at Leu-167 to Leu-187 threads the bilayer. At Ala-188–Ser-226 the chain is on the cytoplasmic side. Residues Leu-227 to Leu-247 form a helical membrane-spanning segment. At Gly-248–Thr-256 the chain is on the periplasmic side. Residues Tyr-257 to Val-277 traverse the membrane as a helical segment. Residues Thr-278–Glu-280 are Cytoplasmic-facing. Residues Thr-281–Leu-301 form a helical membrane-spanning segment. Topologically, residues Gln-302–Glu-304 are periplasmic. The helical transmembrane segment at Leu-305–Pro-325 threads the bilayer. The Cytoplasmic portion of the chain corresponds to Leu-326–Ala-343. A helical transmembrane segment spans residues Ile-344 to Leu-364. Residues Ala-365–Val-366 lie on the Periplasmic side of the membrane. The helical transmembrane segment at Met-367–Ile-387 threads the bilayer. The Cytoplasmic portion of the chain corresponds to Thr-388–His-397.

It belongs to the major facilitator superfamily. LplT (TC 2.A.1.42) family.

The protein resides in the cell inner membrane. In terms of biological role, catalyzes the facilitated diffusion of 2-acyl-glycero-3-phosphoethanolamine (2-acyl-GPE) into the cell. In Shigella sonnei (strain Ss046), this protein is Lysophospholipid transporter LplT.